The chain runs to 1313 residues: Envelopment polyprotein (1313 aa).

The first 17 residues, 1-17, serve as a signal peptide directing secretion; that stretch reads MIFTILNVLTRAMLVMS. At 18–712 the chain is on the lumenal side; it reads MYSLTTWDST…HSTLSAILTS (695 aa). N-linked (GlcNAc...) asparagine; by host glycans are attached at residues N76 and N102. The stretch at 178 to 237 forms a coiled coil; that stretch reads MQVLMSEIEQLKNQLSKKRNERGQEKRDAEKVMSDLMARNSDLRKHNDILTAEISQMKNK. The internal signal sequence for glycoprotein N stretch occupies residues 250–270; the sequence is TVVPAILSVALLSSSVAPIIA. Disulfide bonds link C303–C312, C352–C362, C373–C404, C394–C407, C432–C579, C450–C460, C501–C557, C525–C536, C543–C548, C602–C605, C609–C679, and C629–C634. An N-linked (GlcNAc...) asparagine; by host glycan is attached at N496. Residues 713 to 733 traverse the membrane as a helical segment; that stretch reads FLLILFIYTVFSVTTNILYVL. A golgi retention signal region spans residues 731 to 773; sequence YVLRLIPKQLKSPVGWLKLFINWLLTALRIKTRNVMRRINQRI. Residues 734–791 are Cytoplasmic-facing; that stretch reads RLIPKQLKSPVGWLKLFINWLLTALRIKTRNVMRRINQRIGWVDHHDVERPRHREPMR. The important for correct targeting of the glycoproteins to the Golgi complex but not for heterodimerization stretch occupies residues 769 to 773; that stretch reads INQRI. The tract at residues 793–809 is internal signal sequence for glycoprotein C; it reads FKTTLLLTLIMMTGGNA. 12 disulfides stabilise this stretch: C810/C850, C823/C832, C875/C971, C890/C1084, C896/C944, C902/C951, C907/C933, C937/C942, C1053/C1066, C1148/C1220, C1158/C1161, and C1168/C1202. Residues 810–1278 are Lumenal-facing; it reads CSNTVVANSK…LDWLGGPMKA (469 aa). The interval 896 to 902 is fusion loop; that stretch reads CHLVGDC. The interval 938–949 is fusion loop; sequence GAIGCGCFNINP. A glycan (N-linked (GlcNAc...) asparagine; by host) is linked at N1154. Residue N1243 is glycosylated (N-linked (GlcNAc...) asparagine; by host). Residues 1279–1299 form a helical membrane-spanning segment; that stretch reads ILKILGFIAIGIVCFVLFMIL. Residues 1300–1313 lie on the Cytoplasmic side of the membrane; the sequence is IRIAVNSINIKKKN.

Belongs to the phlebovirus envelope glycoprotein family. In terms of assembly, heterodimer with glycoprotein C. Interacts with nucleocapsid protein N and with the polymerase L in order to package them into virus particles. Heterodimer with glycoprotein C. Homotrimer (postfusion). Interacts with nucleocapsid protein N and with the polymerase L in order to package them into virus particles. Interacts with host E3 ubiquitin-protein ligase UBR4; this interaction is important for viral RNA production. Post-translationally, specific enzymatic cleavages in vivo yield mature proteins including NSm protein, Glycoprotein C, and Glycoprotein N. Glycosylated. The glycans can attach to host CD209/DC-SIGN, and may play a role in virus entry into dendritic cells. In terms of processing, palmitoylated.

Its subcellular location is the virion membrane. It localises to the host Golgi apparatus membrane. It is found in the host endoplasmic reticulum membrane. In terms of biological role, structural component of the virion that interacts with glycoprotein C. It shields the hydrophobic fusion loops of the glycoprotein C, preventing premature fusion. The glycoprotein protrusions are arranged on an icosahedral lattice, with T=12 triangulation. They are able to attach the virion to the host cell receptor CD209/DC-SIGN and to promote fusion of membranes with the late endosome after endocytosis of the virion. Plays a role in the packaging of ribonucleoproteins and polymerase during virus assembly. Structural component of the virion that interacts with glycoprotein N. Acts as a class II fusion protein that is activated upon acidification and subsequent repositioning of the glycoprotein N. The glycoprotein protrusions are arranged on an icosahedral lattice, with T=12 triangulation. They are able to attach the virion to the host cell receptor CD209/DC-SIGN and to promote fusion of membranes with the late endosome after endocytosis of the virion. Its function is as follows. Plays a role for virus dissemination in mosquitoes. The chain is Envelopment polyprotein (GP) from Homo sapiens (Human).